We begin with the raw amino-acid sequence, 223 residues long: Glycerol-3-phosphate acyltransferase (223 aa).

5 helical membrane-spanning segments follow: residues 2–22, 52–72, 78–98, 112–132, and 153–173; these read LEIL…GLVI, WGVA…WLAF, PVFV…SCFM, IFLP…MLVI, and LAVS…AVVV. The tract at residues 191-223 is disordered; it reads WLKSKNKGAAAGNAAEGDDTQNMNPQDAGRKDG.

The protein belongs to the PlsY family. As to quaternary structure, probably interacts with PlsX.

The protein resides in the cell inner membrane. The enzyme catalyses an acyl phosphate + sn-glycerol 3-phosphate = a 1-acyl-sn-glycero-3-phosphate + phosphate. It participates in lipid metabolism; phospholipid metabolism. Functionally, catalyzes the transfer of an acyl group from acyl-phosphate (acyl-PO(4)) to glycerol-3-phosphate (G3P) to form lysophosphatidic acid (LPA). This enzyme utilizes acyl-phosphate as fatty acyl donor, but not acyl-CoA or acyl-ACP. The polypeptide is Glycerol-3-phosphate acyltransferase (Desulfovibrio desulfuricans (strain ATCC 27774 / DSM 6949 / MB)).